The sequence spans 98 residues: Large ribosomal subunit protein uL23 (98 aa).

The protein belongs to the universal ribosomal protein uL23 family. As to quaternary structure, part of the 50S ribosomal subunit. Contacts protein L29, and trigger factor when it is bound to the ribosome.

One of the early assembly proteins it binds 23S rRNA. One of the proteins that surrounds the polypeptide exit tunnel on the outside of the ribosome. Forms the main docking site for trigger factor binding to the ribosome. The protein is Large ribosomal subunit protein uL23 of Rickettsia bellii (strain OSU 85-389).